We begin with the raw amino-acid sequence, 457 residues long: Siroheme synthase (457 aa).

The precorrin-2 dehydrogenase /sirohydrochlorin ferrochelatase stretch occupies residues 1-204; the sequence is MDHLPIFCQL…NDQKAITETT (204 aa). NAD(+)-binding positions include 22–23 and 43–44; these read DV and LA. Phosphoserine is present on S128. The segment at 216–457 is uroporphyrinogen-III C-methyltransferase; sequence GEVVLVGAGP…RDKLNWFSNH (242 aa). P225 contributes to the S-adenosyl-L-methionine binding site. The active-site Proton acceptor is D248. Catalysis depends on K270, which acts as the Proton donor. Residues 301–303, I306, 331–332, M382, and G411 each bind S-adenosyl-L-methionine; these read GGD and TA.

It in the N-terminal section; belongs to the precorrin-2 dehydrogenase / sirohydrochlorin ferrochelatase family. In the C-terminal section; belongs to the precorrin methyltransferase family.

The enzyme catalyses uroporphyrinogen III + 2 S-adenosyl-L-methionine = precorrin-2 + 2 S-adenosyl-L-homocysteine + H(+). It catalyses the reaction precorrin-2 + NAD(+) = sirohydrochlorin + NADH + 2 H(+). It carries out the reaction siroheme + 2 H(+) = sirohydrochlorin + Fe(2+). Its pathway is cofactor biosynthesis; adenosylcobalamin biosynthesis; precorrin-2 from uroporphyrinogen III: step 1/1. It functions in the pathway cofactor biosynthesis; adenosylcobalamin biosynthesis; sirohydrochlorin from precorrin-2: step 1/1. The protein operates within porphyrin-containing compound metabolism; siroheme biosynthesis; precorrin-2 from uroporphyrinogen III: step 1/1. It participates in porphyrin-containing compound metabolism; siroheme biosynthesis; siroheme from sirohydrochlorin: step 1/1. Its pathway is porphyrin-containing compound metabolism; siroheme biosynthesis; sirohydrochlorin from precorrin-2: step 1/1. Its function is as follows. Multifunctional enzyme that catalyzes the SAM-dependent methylations of uroporphyrinogen III at position C-2 and C-7 to form precorrin-2 via precorrin-1. Then it catalyzes the NAD-dependent ring dehydrogenation of precorrin-2 to yield sirohydrochlorin. Finally, it catalyzes the ferrochelation of sirohydrochlorin to yield siroheme. The protein is Siroheme synthase of Shigella flexneri.